The following is a 391-amino-acid chain: Ferrochelatase (391 aa).

His196 and Glu281 together coordinate Fe cation.

The protein belongs to the ferrochelatase family.

The protein localises to the cytoplasm. It catalyses the reaction heme b + 2 H(+) = protoporphyrin IX + Fe(2+). It functions in the pathway porphyrin-containing compound metabolism; protoheme biosynthesis; protoheme from protoporphyrin-IX: step 1/1. Catalyzes the ferrous insertion into protoporphyrin IX. The protein is Ferrochelatase of Prochlorococcus marinus (strain MIT 9301).